We begin with the raw amino-acid sequence, 2528 residues long: Highly reducing polyketide synthase pspA (2528 aa).

Positions 1–53 (MLAQDVEFVDLPPPEATAGAATTDNETSSFNSNPVPTPSEASSIGPPHQLPVP) are disordered. The segment covering 24 to 42 (DNETSSFNSNPVPTPSEAS) has biased composition (polar residues). A Ketosynthase family 3 (KS3) domain is found at 63 to 483 (VEPMAICGMA…GSNAHVLLGS (421 aa)). Residues cysteine 235, histidine 371, and histidine 406 each act as for beta-ketoacyl synthase activity in the active site. The segment at 590–909 (TFTGQGAQWA…HKDLLKAVGE (320 aa)) is malonyl-CoA:ACP transacylase (MAT) domain. The segment at 961–1089 (HDILGSRVLE…GQVCAGSDRE (129 aa)) is N-terminal hotdog fold. A dehydratase (DH) domain region spans residues 961-1230 (HDILGSRVLE…VSNGHVTIDI (270 aa)). The 284-residue stretch at 961-1244 (HDILGSRVLE…MSAIGDAADA (284 aa)) folds into the PKS/mFAS DH domain. The active-site Proton acceptor; for dehydratase activity is the histidine 993. The interval 1099 to 1244 (PRQLSRRGWY…MSAIGDAADA (146 aa)) is C-terminal hotdog fold. The Proton donor; for dehydratase activity role is filled by aspartate 1160. The methyltransferase (CMet) domain stretch occupies residues 1409 to 1587 (VFLELLAHRK…GFSGINLVSH (179 aa)). The segment at 1803–2119 (GLVDTLCWKS…RGQHIGKIVI (317 aa)) is enoyl reductase (ER) (ER) domain. The ketoreductase (KR) domain stretch occupies residues 2143–2322 (RAYLFVGGLG…ASTVNIGVIQ (180 aa)). The Carrier domain occupies 2447 to 2525 (ETAELLAGEI…DLGVLAQKKL (79 aa)). An O-(pantetheine 4'-phosphoryl)serine modification is found at serine 2485.

It carries out the reaction 9 malonyl-CoA + acetyl-CoA + S-adenosyl-L-methionine + 13 NADPH + 20 H(+) = soppiline A + S-adenosyl-L-homocysteine + 9 CO2 + 13 NADP(+) + 10 CoA + 7 H2O. The protein operates within secondary metabolite biosynthesis. Its function is as follows. Highly reducing polyketide synthase; part of the gene cluster that mediates the biosynthesis of the alkylresorcinols called soppilines. The biosynthesis starts with the HR-PKS pspA-catalyzed carbon chain assembly through nine chain elongation cycles, using acetyl CoA and malonyl CoA as a starter and extender units, respectively, to produce the polyketide soppiline A. In the first round, the KR, DH, and CMeT domains work to produce 2-methyl-2-butenyl thioester. In rounds 2 to 5, the KR, DH, and ER domains fully catalyze the reduction of the elongated beta-ketothioester, resulting in the insertion of eight methylene units. The unusual Z,E,Z-triene motif is likely constructed during rounds 6 to 8. Typically, the DH domain introduces a double bond at an alpha,beta-position of an elongated polyketide chain, with the dehydration of a beta-hydroxy group. The last extension cycle would be carried out with L-oriented beta-ketoreduction by the KR domain to produce beta-hydroxy carboxylic acid soppiline A. The type III PKS pspB intercepts the elongated polyketide chain at round 8 from the HR-PKS pspA, followed by a tri-keto extension and decarboxylative aldol cyclization to produce 1,3,5-trisubstituted alkylresorcinol soppiline B. Subsequently, the cytochrome P450 monooxygenase pspC catalyzes three-step oxidations at the C-4 methyl group to carboxylic acid to yield soppiline C. The sequence is that of Highly reducing polyketide synthase pspA from Penicillium soppii.